The chain runs to 140 residues: MAMTMHVDIVSAEGEIFSGQAELVVAPGQEGEVGIAARHAPFLSPLKPGEVRVKSEGQEPLSFYVSGGMLEVQPYLVTILSETAVRAKDIDEAAAQEAKRAAEEALADRSGRMEYAKAQAQLAEAVAQLRTLENYRKGRA.

This sequence belongs to the ATPase epsilon chain family. In terms of assembly, F-type ATPases have 2 components, CF(1) - the catalytic core - and CF(0) - the membrane proton channel. CF(1) has five subunits: alpha(3), beta(3), gamma(1), delta(1), epsilon(1). CF(0) has three main subunits: a, b and c.

It localises to the cell inner membrane. Its function is as follows. Produces ATP from ADP in the presence of a proton gradient across the membrane. The chain is ATP synthase epsilon chain 1 from Methylococcus capsulatus (strain ATCC 33009 / NCIMB 11132 / Bath).